The primary structure comprises 71 residues: Ranatuerin-2P (71 aa).

Positions Met1–Ser20 are cleaved as a signal peptide. The propeptide occupies Leu21–Gly44. Cys66 and Cys71 form a disulfide bridge.

In terms of tissue distribution, expressed by the skin glands.

It is found in the secreted. Functionally, antibacterial activity against Gram-positive bacterium S.aureus and Gram-negative bacterium E.coli. Has activity against C.albicans. This Lithobates pipiens (Northern leopard frog) protein is Ranatuerin-2P.